The following is a 722-amino-acid chain: Ribosomal RNA large subunit methyltransferase K/L (722 aa).

Residues 43 to 154 enclose the THUMP domain; sequence IGLRACLWSR…GNEGRVGIDL (112 aa).

This sequence belongs to the methyltransferase superfamily. RlmKL family.

Its subcellular location is the cytoplasm. The enzyme catalyses guanosine(2445) in 23S rRNA + S-adenosyl-L-methionine = N(2)-methylguanosine(2445) in 23S rRNA + S-adenosyl-L-homocysteine + H(+). The catalysed reaction is guanosine(2069) in 23S rRNA + S-adenosyl-L-methionine = N(2)-methylguanosine(2069) in 23S rRNA + S-adenosyl-L-homocysteine + H(+). Its function is as follows. Specifically methylates the guanine in position 2445 (m2G2445) and the guanine in position 2069 (m7G2069) of 23S rRNA. The chain is Ribosomal RNA large subunit methyltransferase K/L from Magnetococcus marinus (strain ATCC BAA-1437 / JCM 17883 / MC-1).